The primary structure comprises 670 residues: Acetyl-coenzyme A synthetase (670 aa).

Residues arginine 205–arginine 208 and threonine 326 each bind CoA. Residues glycine 402–proline 404, serine 426–threonine 431, aspartate 517, arginine 532, and arginine 543 each bind ATP. Residues histidine 556 and valine 559 each contribute to the Mg(2+) site. Arginine 601 provides a ligand contact to CoA. An N6-acetyllysine modification is found at lysine 626.

It belongs to the ATP-dependent AMP-binding enzyme family. Mg(2+) serves as cofactor. Acetylated. Deacetylation by the SIR2-homolog deacetylase activates the enzyme.

It carries out the reaction acetate + ATP + CoA = acetyl-CoA + AMP + diphosphate. Catalyzes the conversion of acetate into acetyl-CoA (AcCoA), an essential intermediate at the junction of anabolic and catabolic pathways. AcsA undergoes a two-step reaction. In the first half reaction, AcsA combines acetate with ATP to form acetyl-adenylate (AcAMP) intermediate. In the second half reaction, it can then transfer the acetyl group from AcAMP to the sulfhydryl group of CoA, forming the product AcCoA. The polypeptide is Acetyl-coenzyme A synthetase (Pyrobaculum aerophilum (strain ATCC 51768 / DSM 7523 / JCM 9630 / CIP 104966 / NBRC 100827 / IM2)).